A 388-amino-acid chain; its full sequence is Arginine biosynthesis bifunctional protein ArgJ (388 aa).

Substrate contacts are provided by T150, K172, T183, E263, N383, and T388. T183 serves as the catalytic Nucleophile.

It belongs to the ArgJ family. In terms of assembly, heterotetramer of two alpha and two beta chains.

Its subcellular location is the cytoplasm. It carries out the reaction N(2)-acetyl-L-ornithine + L-glutamate = N-acetyl-L-glutamate + L-ornithine. It catalyses the reaction L-glutamate + acetyl-CoA = N-acetyl-L-glutamate + CoA + H(+). Its pathway is amino-acid biosynthesis; L-arginine biosynthesis; L-ornithine and N-acetyl-L-glutamate from L-glutamate and N(2)-acetyl-L-ornithine (cyclic): step 1/1. The protein operates within amino-acid biosynthesis; L-arginine biosynthesis; N(2)-acetyl-L-ornithine from L-glutamate: step 1/4. Its function is as follows. Catalyzes two activities which are involved in the cyclic version of arginine biosynthesis: the synthesis of N-acetylglutamate from glutamate and acetyl-CoA as the acetyl donor, and of ornithine by transacetylation between N(2)-acetylornithine and glutamate. This Corynebacterium efficiens (strain DSM 44549 / YS-314 / AJ 12310 / JCM 11189 / NBRC 100395) protein is Arginine biosynthesis bifunctional protein ArgJ.